A 209-amino-acid chain; its full sequence is Guanylate kinase (209 aa).

Residues 9–188 form the Guanylate kinase-like domain; the sequence is GIMLVMSSPS…SVQQIKSIFI (180 aa). 16 to 23 serves as a coordination point for ATP; that stretch reads SPSGGGKT.

It belongs to the guanylate kinase family.

It localises to the cytoplasm. It carries out the reaction GMP + ATP = GDP + ADP. Essential for recycling GMP and indirectly, cGMP. This chain is Guanylate kinase, found in Ehrlichia ruminantium (strain Gardel).